A 1196-amino-acid chain; its full sequence is uncharacterized protein (1196 aa).

The helical transmembrane segment at 27–47 threads the bilayer; the sequence is ILLLLGSFILLNVWINVVTLL. Disordered regions lie at residues 150–345, 367–402, 669–762, 775–806, 826–877, 960–1009, and 1168–1196; these read GGGE…PQAH, SSVP…ASAP, TQDS…QKNT, CLTQ…DSGI, QATD…QDSE, YRSS…GPYK, and KCEA…DIRM. The segment covering 157 to 177 has biased composition (polar residues); the sequence is VTASKAQASLLSRPETSSQFP. 2 stretches are compositionally biased toward low complexity: residues 212–227 and 253–279; these read HSPT…HPWT and THSQ…TPAH. Residues 299-321 are compositionally biased toward polar residues; the sequence is HTSAQAQTHSPPHTPEYTHSQAH. Pro residues predominate over residues 391-402; sequence APTPAPVPASAP. Polar residues-rich tracts occupy residues 733–742, 750–762, 787–804, and 826–849; these read YLCQNPSPSQ, SGIT…QKNT, PFTQ…TQDS, and QATD…TGNV. Basic and acidic residues predominate over residues 962 to 971; it reads SSEHSQDSNL.

The protein resides in the membrane. This is an uncharacterized protein from Homo sapiens (Human).